The following is a 421-amino-acid chain: 4-hydroxy-3-methylbut-2-en-1-yl diphosphate synthase (flavodoxin) (421 aa).

The [4Fe-4S] cluster site is built by Cys-311, Cys-314, Cys-357, and Glu-364.

This sequence belongs to the IspG family. The cofactor is [4Fe-4S] cluster.

The enzyme catalyses (2E)-4-hydroxy-3-methylbut-2-enyl diphosphate + oxidized [flavodoxin] + H2O + 2 H(+) = 2-C-methyl-D-erythritol 2,4-cyclic diphosphate + reduced [flavodoxin]. Its pathway is isoprenoid biosynthesis; isopentenyl diphosphate biosynthesis via DXP pathway; isopentenyl diphosphate from 1-deoxy-D-xylulose 5-phosphate: step 5/6. In terms of biological role, converts 2C-methyl-D-erythritol 2,4-cyclodiphosphate (ME-2,4cPP) into 1-hydroxy-2-methyl-2-(E)-butenyl 4-diphosphate. The chain is 4-hydroxy-3-methylbut-2-en-1-yl diphosphate synthase (flavodoxin) from Xanthomonas oryzae pv. oryzae (strain KACC10331 / KXO85).